Reading from the N-terminus, the 521-residue chain is Bifunctional purine biosynthesis protein PurH (521 aa).

In terms of domain architecture, MGS-like spans 1–145; that stretch reads MIKQALISVS…KNHRDVTVVV (145 aa).

It belongs to the PurH family.

It catalyses the reaction (6R)-10-formyltetrahydrofolate + 5-amino-1-(5-phospho-beta-D-ribosyl)imidazole-4-carboxamide = 5-formamido-1-(5-phospho-D-ribosyl)imidazole-4-carboxamide + (6S)-5,6,7,8-tetrahydrofolate. The catalysed reaction is IMP + H2O = 5-formamido-1-(5-phospho-D-ribosyl)imidazole-4-carboxamide. It participates in purine metabolism; IMP biosynthesis via de novo pathway; 5-formamido-1-(5-phospho-D-ribosyl)imidazole-4-carboxamide from 5-amino-1-(5-phospho-D-ribosyl)imidazole-4-carboxamide (10-formyl THF route): step 1/1. It functions in the pathway purine metabolism; IMP biosynthesis via de novo pathway; IMP from 5-formamido-1-(5-phospho-D-ribosyl)imidazole-4-carboxamide: step 1/1. The sequence is that of Bifunctional purine biosynthesis protein PurH from Paraburkholderia phymatum (strain DSM 17167 / CIP 108236 / LMG 21445 / STM815) (Burkholderia phymatum).